A 522-amino-acid chain; its full sequence is MSGFNFGGTGAPTGGFTFGTAKTATTTPATGFSFSTSGTGGFNFGAPFQPATSTPSTGLFSLATQTPATQTTGFTFGTATLASGGTGFSLGIGASKLNLSNTAATPAMANPSGFGLGSSNLTNAISSTVTSSQGTAPTGFVFGPSTTSVAPATTSGGFSFTGGSTAQPSGFNIGSAGNSAQPTAPATLPFTPATPAATTAGATQPAAPTPTATITSTGPSLFASIATAPTSSATTGLSLCTPVTTAGAPTAGTQGFSLKAPGAASGTSTTTSTAATATATTTSSSSTTGFALNLKPLAPAGIPSNTAAAVTAPPGPGAAAGAAASSAMTYAQLESLINKWSLELEDQERHFLQQATQVNAWDRTLIENGEKITSLHREVEKVKLDQKRLDQELDFILSQQKELEDLLSPLEELVKEQSGTIYLQHADEEREKTYKLAENIDAQLKRMAQDLKDIIEHLNTSGAPADTSDPLQQICKILNAHMDSLQWIDQNSALLQRKVEEVTKVCEGRRKEQERSFRITFD.

S2 is modified (N-acetylserine). Repeat copies occupy residues 6-7 (FG), 44-45 (FG), 76-77 (FG), 114-115 (FG), and 142-143 (FG). A 5 X 2 AA repeats of F-G region spans residues 6 to 143 (FGGTGAPTGG…GTAPTGFVFG (138 aa)). The span at 169–179 (SGFNIGSAGNS) shows a compositional bias: polar residues. 2 disordered regions span residues 169 to 215 (SGFN…ATIT) and 260 to 288 (APGA…SSTT). Composition is skewed to low complexity over residues 180 to 215 (AQPT…ATIT) and 262 to 288 (GAAS…SSTT). The segment at 328-458 (MTYAQLESLI…QDLKDIIEHL (131 aa)) is required for centrosome localization. Positions 328-458 (MTYAQLESLI…QDLKDIIEHL (131 aa)) form a coiled coil. O-linked (GlcNAc) threonine glycosylation is present at T373. 2 positions are modified to phosphoserine: S408 and S418. O-linked (GlcNAc) serine glycosylation occurs at S468.

Belongs to the nucleoporin NSP1/NUP62 family. Component of the p62 complex, a complex at least composed of NUP62, NUP54, and NUP58. Interacts with NUP88. Interacts with NUTF2. Interacts with HIKESHI. Interacts with OSBPL8. Interacts with CAPG. Interacts with SAS6 and TUBG1 at the centrosome. Interacts with MCM3AP isoform GANP. As to quaternary structure, (Microbial infection) Interacts with Epstein-barr virus BGLF4; this interaction allows BGLF4 nuclear entry. Post-translationally, O-glycosylated. Contains about 10 N-acetylglucosamine side chain sites predicted for the entire protein, among which only one in the C-terminal. In terms of processing, the inner channel of the NPC has a different redox environment from the cytoplasm and allows the formation of interchain disulfide bonds between some nucleoporins, the significant increase of these linkages upon oxidative stress reduces the permeability of the NPC.

The protein localises to the nucleus. The protein resides in the nuclear pore complex. Its subcellular location is the cytoplasm. It is found in the cytoskeleton. It localises to the spindle pole. The protein localises to the nucleus envelope. The protein resides in the microtubule organizing center. Its subcellular location is the centrosome. Functionally, essential component of the nuclear pore complex. The N-terminal is probably involved in nucleocytoplasmic transport. The C-terminal is involved in protein-protein interaction probably via coiled-coil formation, promotes its association with centrosomes and may function in anchorage of p62 to the pore complex. Plays a role in mitotic cell cycle progression by regulating centrosome segregation, centriole maturation and spindle orientation. It might be involved in protein recruitment to the centrosome after nuclear breakdown. This Homo sapiens (Human) protein is Nuclear pore glycoprotein p62 (NUP62).